Reading from the N-terminus, the 283-residue chain is ATP phosphoribosyltransferase (283 aa).

The protein belongs to the ATP phosphoribosyltransferase family. Long subfamily. Mg(2+) is required as a cofactor.

It is found in the cytoplasm. The catalysed reaction is 1-(5-phospho-beta-D-ribosyl)-ATP + diphosphate = 5-phospho-alpha-D-ribose 1-diphosphate + ATP. Its pathway is amino-acid biosynthesis; L-histidine biosynthesis; L-histidine from 5-phospho-alpha-D-ribose 1-diphosphate: step 1/9. Its activity is regulated as follows. Feedback inhibited by histidine. Functionally, catalyzes the condensation of ATP and 5-phosphoribose 1-diphosphate to form N'-(5'-phosphoribosyl)-ATP (PR-ATP). Has a crucial role in the pathway because the rate of histidine biosynthesis seems to be controlled primarily by regulation of HisG enzymatic activity. The sequence is that of ATP phosphoribosyltransferase from Rhodococcus erythropolis (strain PR4 / NBRC 100887).